The following is a 353-amino-acid chain: 3-dehydroquinate synthase (353 aa).

NAD(+)-binding positions include 61–66 (DGEEAK), 119–120 (TT), lysine 132, and lysine 141. Positions 174, 238, and 254 each coordinate Zn(2+).

Belongs to the sugar phosphate cyclases superfamily. Dehydroquinate synthase family. Requires Co(2+) as cofactor. Zn(2+) is required as a cofactor. NAD(+) serves as cofactor.

The protein resides in the cytoplasm. The enzyme catalyses 7-phospho-2-dehydro-3-deoxy-D-arabino-heptonate = 3-dehydroquinate + phosphate. The protein operates within metabolic intermediate biosynthesis; chorismate biosynthesis; chorismate from D-erythrose 4-phosphate and phosphoenolpyruvate: step 2/7. In terms of biological role, catalyzes the conversion of 3-deoxy-D-arabino-heptulosonate 7-phosphate (DAHP) to dehydroquinate (DHQ). This chain is 3-dehydroquinate synthase, found in Sulfolobus acidocaldarius (strain ATCC 33909 / DSM 639 / JCM 8929 / NBRC 15157 / NCIMB 11770).